Consider the following 787-residue polypeptide: Lon protease (787 aa).

Positions 12–210 (LPLIPLRGLA…LIYSILLEEI (199 aa)) constitute a Lon N-terminal domain. An ATP-binding site is contributed by 362-369 (GPPGTGKT). One can recognise a Lon proteolytic domain in the interval 599-780 (NPQIGLVNGL…DEVLEQALLK (182 aa)). Catalysis depends on residues serine 686 and lysine 729.

It belongs to the peptidase S16 family. Homohexamer. Organized in a ring with a central cavity.

The protein localises to the cytoplasm. It catalyses the reaction Hydrolysis of proteins in presence of ATP.. Its function is as follows. ATP-dependent serine protease that mediates the selective degradation of mutant and abnormal proteins as well as certain short-lived regulatory proteins. Required for cellular homeostasis and for survival from DNA damage and developmental changes induced by stress. Degrades polypeptides processively to yield small peptide fragments that are 5 to 10 amino acids long. Binds to DNA in a double-stranded, site-specific manner. This chain is Lon protease, found in Clostridioides difficile (strain 630) (Peptoclostridium difficile).